We begin with the raw amino-acid sequence, 166 residues long: HTH-type transcriptional regulator PecS (166 aa).

Positions 25 to 160 (PMLVIGTLSR…LRALLGRVEK (136 aa)) constitute an HTH marR-type domain.

The protein localises to the cytoplasm. With respect to regulation, the presence of PecM is required to ensure the full regulation of the pecS-pecM intergenic region by PecS. Its function is as follows. Negatively regulates the expression of genes encoding pectinase and cellulase, which play a major role in virulence, and the expression of the blue pigment indigoidine, which is implicated in pathogenicity and protection from oxidative stress. Represses the expression of genes involved in indigoidine biosynthesis by binding to indA and indC promoter regions. Also binds to promoter sites in the pecS-pecM intergenic region and negatively autoregulates its expression as well as that of pecM. The polypeptide is HTH-type transcriptional regulator PecS (Dickeya dadantii (strain 3937) (Erwinia chrysanthemi (strain 3937))).